The sequence spans 273 residues: Undecaprenyl-diphosphatase (273 aa).

The next 8 helical transmembrane spans lie at 18–40 (GLTE…LLGF), 45–65 (AKTF…VVFW), 92–112 (GHIL…HEQI), 114–134 (AIFA…LLLA), 151–171 (LTYL…WPGF), 189–209 (YAAS…ATVL), 225–245 (MFAI…KFFL), and 253–273 (FVPF…ILIG).

The protein belongs to the UppP family.

Its subcellular location is the cell inner membrane. It catalyses the reaction di-trans,octa-cis-undecaprenyl diphosphate + H2O = di-trans,octa-cis-undecaprenyl phosphate + phosphate + H(+). Catalyzes the dephosphorylation of undecaprenyl diphosphate (UPP). Confers resistance to bacitracin. The sequence is that of Undecaprenyl-diphosphatase from Sodalis glossinidius (strain morsitans).